The following is a 59-amino-acid chain: Large ribosomal subunit protein uL30 (59 aa).

This sequence belongs to the universal ribosomal protein uL30 family. In terms of assembly, part of the 50S ribosomal subunit.

The chain is Large ribosomal subunit protein uL30 from Ectopseudomonas mendocina (strain ymp) (Pseudomonas mendocina).